A 141-amino-acid chain; its full sequence is Lutropin subunit beta (141 aa).

An N-terminal signal peptide occupies residues 1–20 (MEMLQGLLLWLLLSMGGARA). Intrachain disulfides connect cysteine 29-cysteine 77, cysteine 43-cysteine 92, cysteine 46-cysteine 130, cysteine 54-cysteine 108, cysteine 58-cysteine 110, and cysteine 113-cysteine 120. N-linked (GlcNAc...) asparagine glycans are attached at residues asparagine 33 and asparagine 50.

Belongs to the glycoprotein hormones subunit beta family. As to quaternary structure, heterodimer of a common alpha chain and a unique beta chain which confers biological specificity to thyrotropin, lutropin, follitropin and gonadotropin.

It localises to the secreted. Its function is as follows. Promotes spermatogenesis and ovulation by stimulating the testes and ovaries to synthesize steroids. The sequence is that of Lutropin subunit beta (LHB) from Macaca fascicularis (Crab-eating macaque).